A 364-amino-acid polypeptide reads, in one-letter code: Spermidine/putrescine import ATP-binding protein PotA (364 aa).

An ABC transporter domain is found at 6–236; the sequence is IEIRQIYKSY…PANLHVAMFI (231 aa). 38–45 contacts ATP; sequence GPSGCGKT.

It belongs to the ABC transporter superfamily. Spermidine/putrescine importer (TC 3.A.1.11.1) family. As to quaternary structure, the complex is composed of two ATP-binding proteins (PotA), two transmembrane proteins (PotB and PotC) and a solute-binding protein (PotD).

It localises to the cell inner membrane. The catalysed reaction is ATP + H2O + polyamine-[polyamine-binding protein]Side 1 = ADP + phosphate + polyamineSide 2 + [polyamine-binding protein]Side 1.. Functionally, part of the ABC transporter complex PotABCD involved in spermidine/putrescine import. Responsible for energy coupling to the transport system. The chain is Spermidine/putrescine import ATP-binding protein PotA from Legionella pneumophila (strain Lens).